An 88-amino-acid polypeptide reads, in one-letter code: UPF0367 protein Tery_1229 (88 aa).

The protein belongs to the UPF0367 family.

The chain is UPF0367 protein Tery_1229 from Trichodesmium erythraeum (strain IMS101).